Consider the following 472-residue polypeptide: Sarcalumenin (472 aa).

The signal sequence occupies residues 1–20; that stretch reads MKRLNLLCCCVASLLLLGTA. N-linked (GlcNAc...) asparagine glycosylation is present at Leu59. In terms of domain architecture, Dynamin-type G spans 89 to 330; the sequence is ITSKPMVLFL…IENRMENKIA (242 aa). The interval 99–106 is G1 motif; the sequence is GPWSVGKS. The interval 127–128 is G2 motif; the sequence is EP. The segment at 189 to 192 is G3 motif; sequence DTPG. The G4 motif stretch occupies residues 254–257; it reads NKAD. Leu278 is a region of interest (G5 motif). Asn280 and Asn388 each carry an N-linked (GlcNAc...) asparagine glycan.

Belongs to the TRAFAC class dynamin-like GTPase superfamily. Dynamin/Fzo/YdjA family. Post-translationally, N-glycosylated.

The protein localises to the sarcoplasmic reticulum lumen. It localises to the sarcoplasmic reticulum membrane. In Gallus gallus (Chicken), this protein is Sarcalumenin (SRL).